The following is a 2148-amino-acid chain: Polyketide synthase 1 (2148 aa).

Residues 19-261 (FIFGDQSSCN…TPLAVHAPYH (243 aa)) form an N-terminal acylcarrier protein transacylase domain (SAT) region. Positions 394–829 (ESKIAIIGMS…GGNTALLVED (436 aa)) constitute a Ketosynthase family 3 (KS3) domain. Catalysis depends on for beta-ketoacyl synthase activity residues Cys-566, His-701, and His-745. The interval 929–1233 (AFVFSGQGSQ…PSLMRNKDGW (305 aa)) is malonyl-CoA:ACP transacylase (MAT) domain. Ser-1018 acts as the For acyl/malonyl transferase activity in catalysis. The tract at residues 1310–1624 (TASVHRIVHE…RKVLNTAMPP (315 aa)) is product template (PT) domain. Residues 1314–1447 (HRIVHESVDK…SSLHFEQPKV (134 aa)) are N-terminal hotdog fold. The PKS/mFAS DH domain occupies 1314 to 1619 (HRIVHESVDK…FQGIPRKVLN (306 aa)). His-1346 (proton acceptor; for dehydratase activity) is an active-site residue. The C-terminal hotdog fold stretch occupies residues 1474–1619 (LNSRMSSGVI…FQGIPRKVLN (146 aa)). The active-site Proton donor; for dehydratase activity is the Asp-1533. The tract at residues 1619–1657 (NTAMPPPKSQNEAPVRSAPAKPAAKPPKSASSEHSGHFA) is disordered. The segment covering 1635 to 1650 (SAPAKPAAKPPKSASS) has biased composition (low complexity). The Carrier 1 domain maps to 1678 to 1752 (RNPMLAVFKI…DLATHLGLDT (75 aa)). At Ser-1712 the chain carries O-(pantetheine 4'-phosphoryl)serine. The span at 1755-1790 (SDQSSGQSSSSGGLSPRSDSIGEITSSATTPPSLSP) shows a compositional bias: low complexity. Residues 1755–1796 (SDQSSGQSSSSGGLSPRSDSIGEITSSATTPPSLSPRGSVSG) are disordered. Positions 1793–1870 (SVSGSQCKDV…SFKHMFQQGH (78 aa)) constitute a Carrier 2 domain. At Ser-1830 the chain carries O-(pantetheine 4'-phosphoryl)serine. A thioesterase (TE) domain region spans residues 1882-2146 (LKQYRATSTL…ERVAAFIRST (265 aa)). The active-site For thioesterase activity is the Ser-1973.

Functionally, polyketide synthase; part of the Pks1 gene cluster that mediates the biosynthesis of an anthraquinone derivative pigment that contributes to conidial pigmentation that provides protection from UV radiation, heat and cold stress. The polyketide synthase Pks1 produces 1-acetyl-2,4,6,8-tetrahydroxy-9,10-anthraquinone though condensation of acetyl-CoA with malonyl-CoA. The dehydratase EthD and the laccase Mlac1 further convert the anthraquinone derivative into the final conidial pigment. This chain is Polyketide synthase 1, found in Metarhizium guizhouense (strain ARSEF 977).